We begin with the raw amino-acid sequence, 242 residues long: Orotidine 5'-phosphate decarboxylase (242 aa).

Substrate is bound by residues Asp-22, Lys-44, Asp-71–Thr-80, Thr-130, Arg-190, Gln-199, Gly-219, and Arg-220. Lys-73 functions as the Proton donor in the catalytic mechanism.

This sequence belongs to the OMP decarboxylase family. Type 1 subfamily. In terms of assembly, homodimer.

It catalyses the reaction orotidine 5'-phosphate + H(+) = UMP + CO2. It functions in the pathway pyrimidine metabolism; UMP biosynthesis via de novo pathway; UMP from orotate: step 2/2. Catalyzes the decarboxylation of orotidine 5'-monophosphate (OMP) to uridine 5'-monophosphate (UMP). This Laribacter hongkongensis (strain HLHK9) protein is Orotidine 5'-phosphate decarboxylase.